Reading from the N-terminus, the 881-residue chain is Plakophilin-2 (881 aa).

The required for interaction with influenza A virus RNA polymerase subunit PB1 stretch occupies residues 1-348 (MAAPGAPAEY…FTDSQLGNAD (348 aa)). Positions 1 to 360 (MAAPGAPAEY…MTLERAVSML (360 aa)) are required for binding to single-stranded DNA. Residue Ser-44 is modified to Phosphoserine. Arg-46 carries the omega-N-methylarginine modification. A Phosphoserine; by MARK3 modification is found at Ser-82. 7 positions are modified to phosphoserine: Ser-132, Ser-135, Ser-151, Ser-154, Ser-155, Ser-169, and Ser-172. Residue Thr-177 is modified to Phosphothreonine. 5 positions are modified to phosphoserine: Ser-183, Ser-197, Ser-251, Ser-294, and Ser-329. Positions 282–314 (QNRASRSSWHQSSFHSTRTLREAGPSVAVDSSG) are disordered. Low complexity predominate over residues 286 to 297 (SRSSWHQSSFHS). 8 ARM repeats span residues 341–383 (DSQL…ECFQ), 385–424 (SEARKRVNQLRGILKLLQLLKVQNEDVQRAVCGALRNLVF), 427–467 (NDNK…NLRS), 571–616 (DGRK…NLSY), 671–711 (PKGV…NLTA), 719–758 (SVAQTVVQKESGLQHTRKMLHVGDPSVKKTAISLLRNLSR), 763–804 (QNEI…NIIQ), and 807–849 (YQNA…SLWA).

It belongs to the beta-catenin family. In terms of assembly, interacts with DSC2. Interacts with JUP. Interacts with KRT5/CK5, KRT8/CK8, KRT14/CK14, KRT18/CK18 and VIM. Interacts (via N-terminus) with MARK3/C-TAK1. Interacts with DSP. Interacts with DSG1, DSG2 and DSG3. Interacts (via N-terminus) with CTNNB1. Interacts with CDH1. Interacts with the RNA polymerase III (Pol III) complex proteins POLR3A/RPC155, POLR3F/RPC39 and POLR3C/RPC82. Interacts with CTNNA3. Interacts (via N-terminus) with SCN5A/Nav1.5. Interacts with ANK3/ANKG and GJA1/CX43. (Microbial infection) Interacts (via N-terminus) with influenza A virus RNA polymerase subunit PB1 (via C-terminus); the interaction competitively inhibits the interaction between the subunits PB1 and PB2. In terms of tissue distribution, expressed at intercalated disks in the heart (at protein level). Expressed in gingival epithelial, endothelial and fibroblast cells (at protein level). Faintly expressed in tracheal epithelial cells (at protein level). Widely expressed. Found at desmosomal plaques in simple and stratified epithelia and in non-epithelial tissues such as myocardium and lymph node follicles. In most stratified epithelia found in the desmosomes of the basal cell layer and seems to be absent from suprabasal strata. As to expression, (Microbial infection) Abundantly expressed in tracheal epithelial cells following influenza A virus infection (at protein level).

It is found in the nucleus. It localises to the cell junction. The protein localises to the desmosome. The protein resides in the cytoplasm. Functionally, a component of desmosome cell-cell junctions which are required for positive regulation of cellular adhesion. Regulates focal adhesion turnover resulting in changes in focal adhesion size, cell adhesion and cell spreading, potentially via transcriptional modulation of beta-integrins. Required to maintain gingival epithelial barrier function. Important component of the desmosome that is also required for localization of desmosome component proteins such as DSC2, DSG2 and JUP to the desmosome cell-cell junction. Required for the formation of desmosome cell junctions in cardiomyocytes, thereby required for the correct formation of the heart, specifically trabeculation and formation of the atria walls. Loss of desmosome cell junctions leads to mis-localization of DSP and DSG2 resulting in disruption of cell-cell adhesion and disordered intermediate filaments. Modulates profibrotic gene expression in cardiomyocytes via regulation of DSP expression and subsequent activation of downstream TGFB1 and MAPK14/p38 MAPK signaling. Required for cardiac sodium current propagation and electrical synchrony in cardiac myocytes, via ANK3 stabilization and modulation of SCN5A/Nav1.5 localization to cell-cell junctions. Required for mitochondrial function, nuclear envelope integrity and positive regulation of SIRT3 transcription via maintaining DES localization at its nuclear envelope and cell tip anchoring points, and thereby preserving regulation of the transcriptional program. Maintenance of nuclear envelope integrity protects against DNA damage and transcriptional dysregulation of genes, especially those involved in the electron transport chain, thereby preserving mitochondrial function and protecting against superoxide radical anion generation. Binds single-stranded DNA (ssDNA). May regulate the localization of GJA1 to gap junctions in intercalated disks of the heart. Involved in the inhibition of viral infection by influenza A viruses (IAV). Acts as a host restriction factor for IAV viral propagation, potentially via disrupting the interaction of IAV polymerase complex proteins. In Homo sapiens (Human), this protein is Plakophilin-2.